A 125-amino-acid chain; its full sequence is Type II secretion system protein I (125 aa).

Residues 1–5 constitute a propeptide, leader sequence; sequence MKQQG. M6 is modified (N-methylmethionine). The helical transmembrane segment at 6 to 26 threads the bilayer; that stretch reads MTLLEVMVALVIFALAGLTVL.

It belongs to the GSP I family. In terms of assembly, type II secretion is composed of four main components: the outer membrane complex, the inner membrane complex, the cytoplasmic secretion ATPase and the periplasm-spanning pseudopilus. Interacts with core component OutG. Post-translationally, cleaved by prepilin peptidase. In terms of processing, methylated by prepilin peptidase at the amino group of the N-terminal methionine once the leader sequence is cleaved by prepilin peptidase.

Its subcellular location is the cell inner membrane. Its function is as follows. Component of the type II secretion system required for the energy-dependent secretion of extracellular factors such as proteases and toxins from the periplasm. Part of the pseudopilus tip complex that is critical for the recognition and binding of secretion substrates. The protein is Type II secretion system protein I (outI) of Dickeya chrysanthemi (Pectobacterium chrysanthemi).